Here is a 649-residue protein sequence, read N- to C-terminus: Serine/threonine-protein kinase par-4 (649 aa).

The segment covering 1-11 (MEGPSSSSVPT) has biased composition (polar residues). The disordered stretch occupies residues 1 to 132 (MEGPSSSSVP…DEEAETPEEQ (132 aa)). The segment covering 45-55 (NTEKMEKEKKP) has biased composition (basic and acidic residues). 2 stretches are compositionally biased toward acidic residues: residues 64 to 77 (PDYD…GSCE) and 117 to 129 (DDME…AETP). A Protein kinase domain is found at 197–460 (YLWGGIIGTG…ISDVMQHPWF (264 aa)). ATP-binding positions include 203–211 (IGTGSYGKV) and Lys-226. Asp-324 serves as the catalytic Proton acceptor. The tract at residues 548-649 (TLEKRPGDGP…CIFRSRTDSS (102 aa)) is disordered. A compositionally biased stretch (low complexity) spans 597 to 609 (AVEVVEAVAAPEA).

Belongs to the protein kinase superfamily. CAMK Ser/Thr protein kinase family. LKB1 subfamily. Mg(2+) serves as cofactor. Mn(2+) is required as a cofactor.

Its subcellular location is the cytoplasm. It localises to the cell cortex. It carries out the reaction L-seryl-[protein] + ATP = O-phospho-L-seryl-[protein] + ADP + H(+). It catalyses the reaction L-threonyl-[protein] + ATP = O-phospho-L-threonyl-[protein] + ADP + H(+). Functionally, required for cytoplasmic partitioning and asymmetric cell division in early embryogenesis. Phosphorylates and restricts the asymmetry effectors mex-5 and mex-6 to the anterior cytoplasm of the zygote and maintains these phosphorylations until fertilization. Phosphorylates and regulates aak-2 in response to oxidative stress. May also play a role in motility, behavioral response, regulation of lifespan and dauer formation through this pathway. The chain is Serine/threonine-protein kinase par-4 from Caenorhabditis briggsae.